The chain runs to 362 residues: 3-dehydroquinate synthase (362 aa).

Residues 70 to 75 (EGEQYK), 104 to 108 (GVIGD), 128 to 129 (TT), K141, K150, and 168 to 171 (TLTT) contribute to the NAD(+) site. Residues E183, H246, and H263 each coordinate Zn(2+).

Belongs to the sugar phosphate cyclases superfamily. Dehydroquinate synthase family. The cofactor is Co(2+). Zn(2+) is required as a cofactor. Requires NAD(+) as cofactor.

Its subcellular location is the cytoplasm. It carries out the reaction 7-phospho-2-dehydro-3-deoxy-D-arabino-heptonate = 3-dehydroquinate + phosphate. It functions in the pathway metabolic intermediate biosynthesis; chorismate biosynthesis; chorismate from D-erythrose 4-phosphate and phosphoenolpyruvate: step 2/7. Its function is as follows. Catalyzes the conversion of 3-deoxy-D-arabino-heptulosonate 7-phosphate (DAHP) to dehydroquinate (DHQ). This chain is 3-dehydroquinate synthase, found in Histophilus somni (strain 129Pt) (Haemophilus somnus).